Reading from the N-terminus, the 244-residue chain is MKIDILTLFPDMFTGVFGSSILKKAQEKEAVNLRVVNFRDYTTSKHNSVDDYPYGGGAGMVLTPQPIFDAVEDLTKETERKPRVVLMCPQGERFTQKKAEELAGEEHLIFVCGHYEGYDERIREHLVTDEISIGDYVLTGGELASMVITDSVVRLLPGVLGNHASQVEDSFSTGLLEHPHYTRPADFRGMKVPDVLMSGNHKNIDEWRHKESLRRTYTRRPDLLDDRDLSKQEKKWLEEIKREQ.

S-adenosyl-L-methionine-binding positions include Gly-113 and 133–138 (IGDYVL).

Belongs to the RNA methyltransferase TrmD family. In terms of assembly, homodimer.

The protein localises to the cytoplasm. The catalysed reaction is guanosine(37) in tRNA + S-adenosyl-L-methionine = N(1)-methylguanosine(37) in tRNA + S-adenosyl-L-homocysteine + H(+). In terms of biological role, specifically methylates guanosine-37 in various tRNAs. The sequence is that of tRNA (guanine-N(1)-)-methyltransferase from Bacillus cereus (strain G9842).